The following is a 193-amino-acid chain: CASP-like protein 2D1 (193 aa).

A disordered region spans residues 1-24 (MRANNNNTREEERSSSSKQQQPQA). Over 1–29 (MRANNNNTREEERSSSSKQQQPQAHMSLK) the chain is Cytoplasmic. A helical transmembrane segment spans residues 30 to 50 (IIDSCLRLSVVPLSVATIWLT). The Extracellular portion of the chain corresponds to 51 to 73 (VTNHESNPDYGNLDYNSIMGLKY). Residues 74–94 (MVGVSAISAIYALLSTISLWV) form a helical membrane-spanning segment. Residues 95–109 (TCLVSKAWLFFVPDQ) are Cytoplasmic-facing. Residues 110-132 (VLAYVMTTSVAGATEIVYLLNKG) form a helical membrane-spanning segment. Over 133 to 151 (DKIVTWSEMCSSYPHYCSK) the chain is Extracellular. A helical transmembrane segment spans residues 152-172 (LTIALGLHVFVLFFFLFLSVI). The Cytoplasmic segment spans residues 173–193 (SAYRAFSPFDPPCDSQTNIDA).

The protein belongs to the Casparian strip membrane proteins (CASP) family. In terms of assembly, homodimer and heterodimers.

The protein resides in the cell membrane. This chain is CASP-like protein 2D1, found in Arabidopsis lyrata subsp. lyrata (Lyre-leaved rock-cress).